The sequence spans 943 residues: uncharacterized protein (943 aa).

The residue at position 1 (Met-1) is an N-acetylmethionine. Disordered stretches follow at residues 37–63 (DETP…QQQQ), 152–177 (KHQF…DDEV), 315–381 (LPMN…QQLQ), 397–472 (QNVP…PLKK), and 515–546 (EREA…ESDD). A compositionally biased stretch (polar residues) spans 41–58 (ISRNGNDSNINIQPSSVP). Positions 152–162 (KHQFGKSKKNT) are enriched in basic residues. The span at 318 to 358 (NNYNNHPGQFQNTPPVMPSGQQPPQQPRTLSLTNGPRYSPQ) shows a compositional bias: polar residues. Residues 367–381 (QQISQRQQQQQQQLQ) show a composition bias toward low complexity. Residues 397-409 (QNVPQGFNPWSPN) are compositionally biased toward polar residues. The span at 417-433 (SMKQPISQSSISSKNNS) shows a compositional bias: low complexity. Positions 434 to 470 (AYSIPNVQNNSLTTFSPSSPTDATAMPNSTKQGSSPL) are enriched in polar residues. Basic and acidic residues predominate over residues 515–533 (EREALVEEKEKERAEKNTE). Residues Ser-553, Ser-586, and Ser-619 each carry the phosphoserine modification. Residues 616 to 639 (EFPSPGKYNSNSDNGEMNTTNEVD) form a disordered region. A compositionally biased stretch (polar residues) spans 622 to 639 (KYNSNSDNGEMNTTNEVD). Phosphoserine is present on Ser-649. A disordered region spans residues 654 to 683 (IPERDPKRNVSDATIKRRESDGNGRRLSNV). A compositionally biased stretch (basic and acidic residues) spans 655–677 (PERDPKRNVSDATIKRRESDGNG). Ser-681, Ser-766, and Ser-771 each carry phosphoserine.

This is an uncharacterized protein from Saccharomyces cerevisiae (strain ATCC 204508 / S288c) (Baker's yeast).